The sequence spans 341 residues: UDP-N-acetylenolpyruvoylglucosamine reductase (341 aa).

The region spanning valine 15 to threonine 185 is the FAD-binding PCMH-type domain. Arginine 161 is a catalytic residue. Serine 231 serves as the catalytic Proton donor. The active site involves glutamate 327.

The protein belongs to the MurB family. FAD is required as a cofactor.

The protein resides in the cytoplasm. It carries out the reaction UDP-N-acetyl-alpha-D-muramate + NADP(+) = UDP-N-acetyl-3-O-(1-carboxyvinyl)-alpha-D-glucosamine + NADPH + H(+). It participates in cell wall biogenesis; peptidoglycan biosynthesis. Cell wall formation. This chain is UDP-N-acetylenolpyruvoylglucosamine reductase, found in Shewanella oneidensis (strain ATCC 700550 / JCM 31522 / CIP 106686 / LMG 19005 / NCIMB 14063 / MR-1).